A 296-amino-acid chain; its full sequence is 4-hydroxybenzoate octaprenyltransferase (296 aa).

The next 8 membrane-spanning stretches (helical) occupy residues 22–42 (PIGILLLLWPTLWALWLSALG), 46–66 (WIVVWIFILGTVLMRSAGCVI), 99–121 (LFAGLSLLSFLLVVFLGNTLVIW), 139–159 (FFAIPQAYLGVAFGFGIPMAY), 163–183 (LGEVPAEAWWLLLANVFWAVA), 211–231 (FDVAAVMLCYGVTLAIIGGIG), 238–258 (PAFYAGLAVATCIMGVHYTWI), and 270–290 (FLHNNWVGLSIFVGIVVDFLV).

It belongs to the UbiA prenyltransferase family. Requires Mg(2+) as cofactor.

Its subcellular location is the cell inner membrane. It carries out the reaction all-trans-octaprenyl diphosphate + 4-hydroxybenzoate = 4-hydroxy-3-(all-trans-octaprenyl)benzoate + diphosphate. Its pathway is cofactor biosynthesis; ubiquinone biosynthesis. Its function is as follows. Catalyzes the prenylation of para-hydroxybenzoate (PHB) with an all-trans polyprenyl group. Mediates the second step in the final reaction sequence of ubiquinone-8 (UQ-8) biosynthesis, which is the condensation of the polyisoprenoid side chain with PHB, generating the first membrane-bound Q intermediate 3-octaprenyl-4-hydroxybenzoate. This Dechloromonas aromatica (strain RCB) protein is 4-hydroxybenzoate octaprenyltransferase.